A 174-amino-acid chain; its full sequence is RNA pyrophosphohydrolase (174 aa).

One can recognise a Nudix hydrolase domain in the interval 6-149 (GFRANVGIII…KRDVYRKVMK (144 aa)). The short motif at 38-59 (GGVDDGESAEEAMYRELYEEVG) is the Nudix box element.

The protein belongs to the Nudix hydrolase family. RppH subfamily. The cofactor is a divalent metal cation.

Functionally, accelerates the degradation of transcripts by removing pyrophosphate from the 5'-end of triphosphorylated RNA, leading to a more labile monophosphorylated state that can stimulate subsequent ribonuclease cleavage. The polypeptide is RNA pyrophosphohydrolase (Shewanella oneidensis (strain ATCC 700550 / JCM 31522 / CIP 106686 / LMG 19005 / NCIMB 14063 / MR-1)).